The following is a 281-amino-acid chain: Putative rRNA methyltransferase YqxC (281 aa).

One can recognise an S4 RNA-binding domain in the interval 6-67 (ERLDVLLVER…NPLRYVSRGG (62 aa)).

This sequence belongs to the TlyA family.

This is Putative rRNA methyltransferase YqxC (yqxC) from Bacillus subtilis (strain 168).